The primary structure comprises 226 residues: ATP synthase F(0) complex subunit a (226 aa).

6 consecutive transmembrane segments (helical) span residues 13 to 33 (VILGIPLIAIAMLDPFTLISW), 69 to 89 (WALLLTSLMLLLMSLNLLGLL), 97 to 117 (TQLSLNMGLAVPLWLATVIMA), 138 to 158 (IPVLIIIETISLFIRPLALGV), 179 to 199 (FVLLSIMPTVAILTSIVLFLL), and 201 to 221 (LLEIAVAMIQAYVFVLLLSLY).

Belongs to the ATPase A chain family. In terms of assembly, component of the ATP synthase complex composed at least of ATP5F1A/subunit alpha, ATP5F1B/subunit beta, ATP5MC1/subunit c (homooctomer), MT-ATP6/subunit a, MT-ATP8/subunit 8, ATP5ME/subunit e, ATP5MF/subunit f, ATP5MG/subunit g, ATP5MK/subunit k, ATP5MJ/subunit j, ATP5F1C/subunit gamma, ATP5F1D/subunit delta, ATP5F1E/subunit epsilon, ATP5PF/subunit F6, ATP5PB/subunit b, ATP5PD/subunit d, ATP5PO/subunit OSCP. ATP synthase complex consists of a soluble F(1) head domain (subunits alpha(3) and beta(3)) - the catalytic core - and a membrane F(0) domain - the membrane proton channel (subunits c, a, 8, e, f, g, k and j). These two domains are linked by a central stalk (subunits gamma, delta, and epsilon) rotating inside the F1 region and a stationary peripheral stalk (subunits F6, b, d, and OSCP). Interacts with DNAJC30; interaction is direct.

The protein localises to the mitochondrion inner membrane. The enzyme catalyses H(+)(in) = H(+)(out). Subunit a, of the mitochondrial membrane ATP synthase complex (F(1)F(0) ATP synthase or Complex V) that produces ATP from ADP in the presence of a proton gradient across the membrane which is generated by electron transport complexes of the respiratory chain. ATP synthase complex consist of a soluble F(1) head domain - the catalytic core - and a membrane F(1) domain - the membrane proton channel. These two domains are linked by a central stalk rotating inside the F(1) region and a stationary peripheral stalk. During catalysis, ATP synthesis in the catalytic domain of F(1) is coupled via a rotary mechanism of the central stalk subunits to proton translocation. With the subunit c (ATP5MC1), forms the proton-conducting channel in the F(0) domain, that contains two crucial half-channels (inlet and outlet) that facilitate proton movement from the mitochondrial intermembrane space (IMS) into the matrix. Protons are taken up via the inlet half-channel and released through the outlet half-channel, following a Grotthuss mechanism. This Xenopus laevis (African clawed frog) protein is ATP synthase F(0) complex subunit a.